The sequence spans 122 residues: NADH-quinone oxidoreductase subunit A (122 aa).

Transmembrane regions (helical) follow at residues 10 to 30 (MIVLIFLLLGILLPVVALTLG), 66 to 86 (IFALLFVIFDVETLFLYPWAV), and 91 to 111 (LGLFALIEMLIFVVMLLVGLA).

Belongs to the complex I subunit 3 family. NDH-1 is composed of 14 different subunits. Subunits NuoA, H, J, K, L, M, N constitute the membrane sector of the complex.

The protein localises to the cell membrane. It carries out the reaction a quinone + NADH + 5 H(+)(in) = a quinol + NAD(+) + 4 H(+)(out). In terms of biological role, NDH-1 shuttles electrons from NADH, via FMN and iron-sulfur (Fe-S) centers, to quinones in the respiratory chain. The immediate electron acceptor for the enzyme in this species is believed to be a menaquinone. Couples the redox reaction to proton translocation (for every two electrons transferred, four hydrogen ions are translocated across the cytoplasmic membrane), and thus conserves the redox energy in a proton gradient. This is NADH-quinone oxidoreductase subunit A from Bacillus thuringiensis subsp. konkukian (strain 97-27).